A 362-amino-acid polypeptide reads, in one-letter code: Protein-arginine kinase (362 aa).

Residues 24-255 (IVLSSRIRLA…QQLIAQERMA (232 aa)) form the Phosphagen kinase C-terminal domain. ATP contacts are provided by residues 27–31 (SSRIR), histidine 92, arginine 126, 177–181 (RASVM), and 208–213 (RGTYGE). An RDXXRA motif of the pArg binding pocket involved in allosteric regulation motif is present at residues 338-343 (RDVRRA).

The protein belongs to the ATP:guanido phosphotransferase family.

The enzyme catalyses L-arginyl-[protein] + ATP = N(omega)-phospho-L-arginyl-[protein] + ADP + H(+). Its activity is regulated as follows. Appears to be allosterically activated by the binding of pArg-containing polypeptides to the pArg-binding pocket localized in the C-terminal domain of McsB. Its function is as follows. Catalyzes the specific phosphorylation of arginine residues in a large number of proteins. Is part of the bacterial stress response system. Protein arginine phosphorylation has a physiologically important role and is involved in the regulation of many critical cellular processes, such as protein homeostasis, motility, competence, and stringent and stress responses, by regulating gene expression and protein activity. The polypeptide is Protein-arginine kinase (Geobacillus sp. (strain WCH70)).